We begin with the raw amino-acid sequence, 673 residues long: DNA ligase (673 aa).

NAD(+) contacts are provided by residues 33–37 (DYEYD), 82–83 (SL), and E113. K115 (N6-AMP-lysine intermediate) is an active-site residue. NAD(+) is bound by residues R136, E170, K285, and K309. Zn(2+) contacts are provided by C403, C406, C421, and C426. Residues 583–672 (AKSDILKGYT…SREEAEKILM (90 aa)) enclose the BRCT domain.

It belongs to the NAD-dependent DNA ligase family. LigA subfamily. Mg(2+) serves as cofactor. It depends on Mn(2+) as a cofactor.

The enzyme catalyses NAD(+) + (deoxyribonucleotide)n-3'-hydroxyl + 5'-phospho-(deoxyribonucleotide)m = (deoxyribonucleotide)n+m + AMP + beta-nicotinamide D-nucleotide.. DNA ligase that catalyzes the formation of phosphodiester linkages between 5'-phosphoryl and 3'-hydroxyl groups in double-stranded DNA using NAD as a coenzyme and as the energy source for the reaction. It is essential for DNA replication and repair of damaged DNA. The polypeptide is DNA ligase (Caldicellulosiruptor bescii (strain ATCC BAA-1888 / DSM 6725 / KCTC 15123 / Z-1320) (Anaerocellum thermophilum)).